The primary structure comprises 173 residues: Protein-export protein SecB (173 aa).

The protein belongs to the SecB family. Homotetramer, a dimer of dimers. One homotetramer interacts with 1 SecA dimer.

Its subcellular location is the cytoplasm. One of the proteins required for the normal export of preproteins out of the cell cytoplasm. It is a molecular chaperone that binds to a subset of precursor proteins, maintaining them in a translocation-competent state. It also specifically binds to its receptor SecA. The sequence is that of Protein-export protein SecB from Novosphingobium aromaticivorans (strain ATCC 700278 / DSM 12444 / CCUG 56034 / CIP 105152 / NBRC 16084 / F199).